We begin with the raw amino-acid sequence, 162 residues long: Transcriptional repressor NrdR (162 aa).

The interval 1–21 (MNCPDCGDEQTRVIDTETSAD) is disordered. A zinc finger lies at 3 to 34 (CPDCGDEQTRVIDTETSADGTSVRRRRECQRC). An ATP-cone domain is found at 49 to 139 (LQVKKRNGTI…VYKAFSEPQE (91 aa)).

The protein belongs to the NrdR family. Zn(2+) serves as cofactor.

In terms of biological role, negatively regulates transcription of bacterial ribonucleotide reductase nrd genes and operons by binding to NrdR-boxes. The protein is Transcriptional repressor NrdR of Halorubrum lacusprofundi (strain ATCC 49239 / DSM 5036 / JCM 8891 / ACAM 34).